The sequence spans 196 residues: Probable malonic semialdehyde reductase RutE (196 aa).

Belongs to the nitroreductase family. HadB/RutE subfamily. FMN serves as cofactor.

The enzyme catalyses 3-hydroxypropanoate + NADP(+) = 3-oxopropanoate + NADPH + H(+). In terms of biological role, may reduce toxic product malonic semialdehyde to 3-hydroxypropionic acid, which is excreted. This is Probable malonic semialdehyde reductase RutE from Escherichia coli O45:K1 (strain S88 / ExPEC).